A 309-amino-acid chain; its full sequence is Glutaminase 2 (309 aa).

The substrate site is built by S65, N117, E162, N169, Y193, Y245, and V263.

It belongs to the glutaminase family. As to quaternary structure, homotetramer.

The enzyme catalyses L-glutamine + H2O = L-glutamate + NH4(+). The sequence is that of Glutaminase 2 from Bacillus subtilis (strain 168).